A 486-amino-acid polypeptide reads, in one-letter code: Probable transporter MCH1 (486 aa).

Over 1–29 (MPLSKVEHYLSYHTRLLLPHVLSLQSSHR) the chain is Cytoplasmic. A helical transmembrane segment spans residues 30–50 (VAYIFSLLSAVSTGFITLISL). Residues 51–67 (YSQPWQKHLNYSSWQIN) lie on the Vacuolar side of the membrane. N-linked (GlcNAc...) asparagine glycosylation occurs at N60. A helical membrane pass occupies residues 68 to 88 (TIASMTNLGMYLTPPILGMIA). Topologically, residues 89–93 (DSHGP) are cytoplasmic. The helical transmembrane segment at 94 to 114 (ITLSLLAIIGFIPSYSYLAYV) threads the bilayer. Over 115–133 (FNHPELSLGGNGDSSFNLS) the chain is Vacuolar. An N-linked (GlcNAc...) asparagine glycan is attached at N131. The chain crosses the membrane as a helical span at residues 134–154 (IICFVFIGISTSALYFSALLT). At 155 to 163 (CTKLYPHTK) the chain is on the cytoplasmic side. Residues 164 to 184 (LLSISLPTTCYGISSVVGSQL) traverse the membrane as a helical segment. Topologically, residues 185–212 (LRIKWFWSSNASSSSSNSDLNLGRVFQT) are vacuolar. N194 carries N-linked (GlcNAc...) asparagine glycosylation. A helical membrane pass occupies residues 213–233 (FALVYVVIGLLAWIATSVVSL). At 234–279 (LHFNEEQDNQKRLDDQTDVEQSPLLERSNHVQEKFTQTMLRIFSDP) the chain is on the cytoplasmic side. The residue at position 255 (S255) is a Phosphoserine. Residues 280–300 (VTYILAVSILLSLGPLEMFIA) traverse the membrane as a helical segment. Over 301-320 (NMGSLTNLLVQLDAPTLSTK) the chain is Vacuolar. Residues 321 to 343 (LLSTYALSSTFTRLLTGIVADFF) traverse the membrane as a helical segment. The Cytoplasmic segment spans residues 344-347 (AKKK). Residues 348–368 (ISIKWILLTFLSLGVCAQLFL) traverse the membrane as a helical segment. The Vacuolar segment spans residues 369-385 (LKMTSSASPWGLVPTGS). Residues 386–406 (LVGIVYGGLFTVYPTLVLLVW) traverse the membrane as a helical segment. Over 407 to 413 (GERSFGT) the chain is Cytoplasmic. Residues 414–434 (VYGSLLIAPAIGSMIFCMLYA) traverse the membrane as a helical segment. Topologically, residues 435 to 456 (KFYDSRCMSGGGDLRNPSCISA) are vacuolar. The helical transmembrane segment at 457 to 477 (VYKYSSIAFVVSAVLSAVVFW) threads the bilayer. The Cytoplasmic segment spans residues 478–486 (KLKSRKLRI).

Belongs to the major facilitator superfamily.

It localises to the vacuole membrane. Its function is as follows. Probable transporter. Does not act in the transport of monocarboxylic acids across the plasma membrane. This Saccharomyces cerevisiae (strain ATCC 204508 / S288c) (Baker's yeast) protein is Probable transporter MCH1 (MCH1).